The following is a 561-amino-acid chain: Nucleoprotein (561 aa).

The segment at 52 to 237 (VRKDKRTDSD…ISHEPSALNI (186 aa)) is binding site for the cap structure m7GTP. A disordered region spans residues 336 to 355 (SKPSAIQPPVRNGGSPDLKQ). 2 residues coordinate Mn(2+): Asp380 and Glu382. Zn(2+)-binding residues include Glu390, Cys497, His500, and Cys521. Residue Asp525 coordinates Mn(2+).

The protein belongs to the arenaviridae nucleocapsid protein family. Homomultimerizes to form the nucleocapsid. Binds to viral genomic RNA. Interacts with glycoprotein G2. Interacts with protein Z; this interaction probably directs the encapsidated genome to budding sites. Interacts with protein L; this interaction does not interfere with Z-L interaction. Interacts with host IKBKE (via Protein kinase domain); the interaction inhibits IKBKE kinase activity.

Its subcellular location is the virion. It is found in the host cytoplasm. Its function is as follows. Encapsidates the genome, protecting it from nucleases. The encapsidated genomic RNA is termed the nucleocapsid (NC). Serves as template for viral transcription and replication. The increased presence of protein N in host cell does not seem to trigger the switch from transcription to replication as observed in other negative strain RNA viruses. Through the interaction with host IKBKE, strongly inhibits the phosphorylation and nuclear translocation of host IRF3, a protein involved in interferon activation pathway, leading to the inhibition of interferon-beta and IRF3-dependent promoters activation. Also encodes a functional 3'-5' exoribonuclease that degrades preferentially dsRNA substrates and thereby participates in the suppression of interferon induction. The polypeptide is Nucleoprotein (Cavia cutleri (Guinea pig)).